The sequence spans 343 residues: MPIIAPISRDERRLMQKAIHKTHDKNYARRLTAMLMLHRGDRVSDVARTLCCARSSVGRWINWFTQSGVEGLKSLPAGRARRWPFEHICTLLRELVKHSPGDFGYQRSRWSTELLAIKINEITGCQLNAGTVRRWLPSAGIVWRRAAPTLRIRDPHKDEKMAAIHKALDECSAEHPVFYEDEVDIHLNPKIGADWQLRGQQKRVVTPGQNEKYYLAGALHSGTGKVSCVGGNSKSSALFISLLKRLKATYRRAKTITLIVDNYIIHKSRETQSWLKENPKFRVIYQPVYSPWVNHVERLWQALHDTITRNHQCSSMWQLLKKVRHFMETVSPFPGGKHGLAKV.

The protein is Insertion element IS630 uncharacterized 39 kDa protein of Shigella sonnei.